The primary structure comprises 266 residues: Apoptosis regulator ced-9 (266 aa).

Positions 1 to 58 (MVDSMDMANSSQNTFRRRTMATSEMREFLSTKDAEPNNFGMQTIPESPTPSTPTRRMS) are disordered. Positions 24-35 (EMREFLSTKDAE) are enriched in basic and acidic residues. The BH4 motif lies at 75-94 (IQGFVVDYFTYRIAQNGLDW). The short motif at 156 to 174 (NTPCPMSYGRLIGLISFGG) is the BH1 element. The BH2 motif lies at 208 to 223 (SWKEHNRSWADFMKLG).

It belongs to the Bcl-2 family. Interacts with asymmetric homodimer ced-4; the interaction sequesters ced-4. Interacts with egl-1; the interaction results in ced-4 release. Interacts with dre-1; the interaction inhibits ced-9 activity, either directly or indirectly. Interacts with dct-1. May form a complex composed of ced-9, ced-4 and mac-1.

The protein localises to the perikaryon. It localises to the synapse. The protein resides in the endomembrane system. It is found in the mitochondrion membrane. In terms of biological role, plays a major role in programmed cell death (PCD, apoptosis). egl-1 binds to and directly inhibits the activity of ced-9, releasing the cell death activator ced-4 from a ced-9/ced-4 containing protein complex and allowing ced-4 to activate the cell-killing caspase ced-3. During larval development, required for the elimination of transient presynaptic components downstream of egl-1 and upstream of ced-4 and ced-3 apoptotic pathway. The sequence is that of Apoptosis regulator ced-9 (ced-9) from Caenorhabditis briggsae.